Consider the following 376-residue polypeptide: MLDLIQTRRALHQIPEIGLEEFKTQAYLLDVIEKLTTGKDFVQIRTWRTGILVYLQGSQPERTIGWRTDIDGLPIVEQTGLPFASQHQGRMHACGHDFHMTIALGCLERALEEQPKNNLLFLFQPAEENEAGGMLMYEDGAFGDWLPNQFYGLHVRPDLKVGQIATNTHTLFAGTCEVKIRFKGKGGHAAFPHEANDALVAASYFVTQVQSVVSRNVNPIEGAVVTFGVFQAGTTNNVITDTAFLHGTIRALTQDMSLLVQKRVKTVAEGVAAAFDMEVEVELKQGGYLPVENNPALARELMDFFDEKDGIELIDIEPAMTGEDFGYLLSKVDGVMFWLGIDSPYALHHPQMSPKEEVLAIGVAAVSSFLKKKAAE.

Asp-69 is a catalytic residue. The active-site Proton acceptor is the Glu-128.

Belongs to the peptidase M20A family. N-acetyldiaminopimelate deacetylase subfamily.

It catalyses the reaction N-acetyl-(2S,6S)-2,6-diaminopimelate + H2O = (2S,6S)-2,6-diaminopimelate + acetate. The protein operates within amino-acid biosynthesis; L-lysine biosynthesis via DAP pathway; LL-2,6-diaminopimelate from (S)-tetrahydrodipicolinate (acetylase route): step 3/3. Functionally, catalyzes the conversion of N-acetyl-diaminopimelate to diaminopimelate and acetate. This is N-acetyldiaminopimelate deacetylase from Streptococcus pneumoniae (strain CGSP14).